We begin with the raw amino-acid sequence, 398 residues long: Protein trichome birefringence-like 45 (398 aa).

A helical; Signal-anchor for type II membrane protein membrane pass occupies residues 1–21 (MAAVQCLTFLFLFLLQNATSA). The GDS motif signature appears at 131-133 (GDS). The DCXHWCLPGXXDXWN motif signature appears at 375-389 (DCSHWCLPGLPDTWN).

It belongs to the PC-esterase family. TBL subfamily.

The protein localises to the membrane. Its function is as follows. May act as a bridging protein that binds pectin and other cell wall polysaccharides. Probably involved in maintaining esterification of pectins. May be involved in the specific O-acetylation of cell wall polymers. The chain is Protein trichome birefringence-like 45 (TBL45) from Arabidopsis thaliana (Mouse-ear cress).